The following is a 619-amino-acid chain: Replication restart protein PriA (619 aa).

A Helicase ATP-binding domain is found at 119–285; sequence LKELQKHPAS…KDKALVRLKG (167 aa). 132–139 provides a ligand contact to ATP; the sequence is GDTGSGKT. Residues 228–231 carry the DEAH box motif; it reads DEEH. Zn(2+) contacts are provided by C336, C339, C345, C348, C363, C366, C376, and C379. The 162-residue stretch at 371–532 folds into the Helicase C-terminal domain; the sequence is PIPKICNACQ…ELYPPFSRLC (162 aa).

The protein belongs to the helicase family. PriA subfamily. Component of the replication restart primosome. Requires Zn(2+) as cofactor.

The enzyme catalyses Couples ATP hydrolysis with the unwinding of duplex DNA by translocating in the 3'-5' direction.. It carries out the reaction ATP + H2O = ADP + phosphate + H(+). In terms of biological role, initiates the restart of stalled replication forks, which reloads the replicative helicase on sites other than the origin of replication. Recognizes and binds to abandoned replication forks and remodels them to uncover a helicase loading site. Promotes assembly of the primosome at these replication forks. The chain is Replication restart protein PriA from Helicobacter pylori (strain J99 / ATCC 700824) (Campylobacter pylori J99).